Consider the following 333-residue polypeptide: Foldase protein PrsA (333 aa).

The N-terminal stretch at 1-21 (MKKRTIATGLVTLLSIVTLAA) is a signal peptide. Cys-22 carries the N-palmitoyl cysteine lipid modification. Cys-22 is lipidated: S-diacylglycerol cysteine. Residues 144 to 237 (KPEVTAQVIQ…PVYYIVKITK (94 aa)) form the PpiC domain. The interval 296–333 (AASGSGSSGSTTTTTAASSAATTAADDQTTAAETTAAE) is disordered.

It belongs to the PrsA family.

It is found in the cell membrane. It carries out the reaction [protein]-peptidylproline (omega=180) = [protein]-peptidylproline (omega=0). Its function is as follows. Plays a major role in protein secretion by helping the post-translocational extracellular folding of several secreted proteins. The chain is Foldase protein PrsA from Streptococcus mutans serotype c (strain ATCC 700610 / UA159).